A 4545-amino-acid chain; its full sequence is Prolow-density lipoprotein receptor-related protein 1 (4545 aa).

Residues 1 to 19 form the signal peptide; sequence MLTPPLLLLLPLLSALVSG. Residues 20 to 4424 are Extracellular-facing; the sequence is ATMDAPKTCS…SQQQPGHMAS (4405 aa). LDL-receptor class A domains are found at residues 26 to 67 and 71 to 111; these read KTCS…ICPQ and QRCP…HCRE. 6 disulfides stabilise this stretch: cysteine 28-cysteine 41, cysteine 35-cysteine 54, cysteine 48-cysteine 65, cysteine 73-cysteine 86, cysteine 80-cysteine 99, and cysteine 93-cysteine 109. One can recognise an EGF-like 1 domain in the interval 112 to 150; sequence LRANCSRMGCQHHCVPTPSGPTCYCNSSFQLQADGKTCK. A glycan (N-linked (GlcNAc...) asparagine) is linked at asparagine 115. Cystine bridges form between cysteine 116–cysteine 125, cysteine 121–cysteine 134, cysteine 136–cysteine 149, cysteine 155–cysteine 165, cysteine 161–cysteine 174, and cysteine 176–cysteine 189. N-linked (GlcNAc...) asparagine glycosylation occurs at asparagine 137. Residues 151-190 enclose the EGF-like 2; calcium-binding domain; it reads DFDECSVYGTCSQLCTNTDGSFTCGCVEGYLLQPDNRSCK. N-linked (GlcNAc...) asparagine glycans are attached at residues asparagine 186, asparagine 240, and asparagine 275. LDL-receptor class B repeat units lie at residues 293-335, 336-379, and 380-423; these read GNFY…DPAM, GKVF…DLVS, and RLVY…FENY. An N-linked (GlcNAc...) asparagine glycan is attached at asparagine 358. Asparagine 447 carries N-linked (GlcNAc...) asparagine glycosylation. One can recognise an EGF-like 3 domain in the interval 475 to 521; that stretch reads RSHACENDQYGKPGGCSDICLLANSHKARTCRCRSGFSLGSDGKSCK. Disulfide bonds link cysteine 479/cysteine 494, cysteine 490/cysteine 505, and cysteine 507/cysteine 520. LDL-receptor class B repeat units follow at residues 572–614, 615–660, 661–711, and 712–755; these read GFIY…DWMG, DNLY…DPLN, GWMY…DIPA, and GRLY…HGNY. Asparagine 730 carries an N-linked (GlcNAc...) asparagine glycan. Residues 804–844 enclose the EGF-like 4 domain; sequence GTNKCRVNNGGCSSLCLATPGSRQCACAEDQVLDTDGVTCL. 33 disulfide bridges follow: cysteine 808–cysteine 819, cysteine 815–cysteine 828, cysteine 830–cysteine 843, cysteine 855–cysteine 867, cysteine 862–cysteine 880, cysteine 874–cysteine 891, cysteine 896–cysteine 908, cysteine 903–cysteine 921, cysteine 915–cysteine 932, cysteine 937–cysteine 949, cysteine 944–cysteine 962, cysteine 956–cysteine 972, cysteine 977–cysteine 990, cysteine 985–cysteine 1003, cysteine 997–cysteine 1012, cysteine 1016–cysteine 1028, cysteine 1023–cysteine 1041, cysteine 1035–cysteine 1052, cysteine 1063–cysteine 1076, cysteine 1070–cysteine 1089, cysteine 1083–cysteine 1098, cysteine 1105–cysteine 1119, cysteine 1113–cysteine 1132, cysteine 1126–cysteine 1141, cysteine 1146–cysteine 1160, cysteine 1153–cysteine 1173, cysteine 1167–cysteine 1183, cysteine 1186–cysteine 1197, cysteine 1193–cysteine 1207, cysteine 1209–cysteine 1222, cysteine 1228–cysteine 1238, cysteine 1234–cysteine 1247, and cysteine 1249–cysteine 1262. LDL-receptor class A domains are found at residues 853-893, 894-934, 935-974, 975-1014, 1014-1054, 1061-1100, 1103-1143, and 1144-1183; these read PQCQ…LCHQ, HTCP…TCSA, RTCP…SCAY, PTCF…GCSH, HSCS…NCTN, GGCH…SCEG, HVCD…NCEA, and LACR…GELC. Tryptophan 872, aspartate 875, aspartate 877, aspartate 879, aspartate 885, and glutamate 886 together coordinate Ca(2+). N-linked (GlcNAc...) asparagine glycosylation is present at asparagine 929. Residues tryptophan 1033, aspartate 1036, aspartate 1038, aspartate 1040, aspartate 1046, and glutamate 1047 each contribute to the Ca(2+) site. A glycan (N-linked (GlcNAc...) asparagine) is linked at asparagine 1051. Ca(2+) is bound by residues tryptophan 1081, aspartate 1084, aspartate 1086, aspartate 1088, aspartate 1094, and glutamate 1095. N-linked (GlcNAc...) asparagine glycosylation is found at asparagine 1155 and asparagine 1156. 2 EGF-like domains span residues 1184 to 1223 and 1224 to 1263; these read DQCS…HTCQ and IQSY…ESCR. N-linked (GlcNAc...) asparagine glycosylation is found at asparagine 1196 and asparagine 1219. LDL-receptor class B repeat units follow at residues 1310–1356, 1357–1399, 1400–1446, 1447–1491, and 1492–1532; these read SALY…DWIA, GNIY…DPRD, GILF…DYLE, KRIL…YGGE, and VYWT…YHPS. N-linked (GlcNAc...) asparagine glycosylation occurs at asparagine 1512. In terms of domain architecture, EGF-like 7 spans 1537-1580; that stretch reads APNPCEANGGRGPCSHLCLINYNRTVSCACPHLMKLHKDNTTCY. Cystine bridges form between cysteine 1541–cysteine 1554, cysteine 1550–cysteine 1564, and cysteine 1566–cysteine 1579. Asparagine 1559, asparagine 1576, asparagine 1617, and asparagine 1646 each carry an N-linked (GlcNAc...) asparagine glycan. LDL-receptor class B repeat units lie at residues 1628–1670, 1671–1714, 1715–1754, and 1755–1799; these read QRVY…DWVS, RNLF…HPLR, GKLY…DFPE, and SKLY…MGDK. Residues asparagine 1724, asparagine 1734, asparagine 1764, and asparagine 1826 are each glycosylated (N-linked (GlcNAc...) asparagine). In terms of domain architecture, EGF-like 8 spans 1847–1888; sequence GTNPCSVNNGDCSQLCLPTSETTRSCMCTAGYSLRSGQQACE. 3 cysteine pairs are disulfide-bonded: cysteine 1851–cysteine 1862, cysteine 1858–cysteine 1872, and cysteine 1874–cysteine 1887. Asparagine 1934 carries N-linked (GlcNAc...) asparagine glycosylation. 4 LDL-receptor class B repeats span residues 1935–1977, 1978–2020, 2021–2064, and 2065–2108; these read DTIY…DWIA, GNIY…HPEK, GYLF…DYQG, and GKLY…FEDF. Asparagine 1996 is a glycosylation site (N-linked (GlcNAc...) asparagine). Position 2010 is an N6-acetyllysine (lysine 2010). Asparagine 2049 carries an N-linked (GlcNAc...) asparagine glycan. N-linked (GlcNAc...) asparagine glycosylation is found at asparagine 2118 and asparagine 2128. One can recognise an EGF-like 9 domain in the interval 2156 to 2196; it reads GTNVCAVANGGCQQLCLYRGGGQRACACAHGMLAEDGASCR. Intrachain disulfides connect cysteine 2160–cysteine 2171, cysteine 2167–cysteine 2181, and cysteine 2183–cysteine 2195. LDL-receptor class B repeat units follow at residues 2254–2295, 2296–2344, 2345–2389, 2390–2432, and 2433–2474; these read NRIF…HRGW, DTLY…DECQ, NLMF…DHRA, EKLY…YGEH, and IFWT…VAND. N-linked (GlcNAc...) asparagine glycosylation is present at asparagine 2473. Residues 2479–2519 form the EGF-like 10 domain; the sequence is ELSPCRINNGGCQDLCLLTHQGHVNCSCRGGRILQEDFTCR. Cystine bridges form between cysteine 2483–cysteine 2494, cysteine 2490–cysteine 2504, and cysteine 2506–cysteine 2518. Asparagine 2503 carries an N-linked (GlcNAc...) asparagine glycan. Asparagine 2522 carries an N-linked (GlcNAc...) asparagine glycan. 7 LDL-receptor class A domains span residues 2523–2564, 2565–2603, 2604–2642, 2643–2691, 2695–2733, 2733–2772, and 2773–2815; these read SSCR…YCNS, RRCK…PCNK, TACG…NCSA, TDCS…DCPG, PRCP…HCNK, KFCS…HCEG, and KTCG…GCLY. 6 cysteine pairs are disulfide-bonded: cysteine 2525/cysteine 2538, cysteine 2533/cysteine 2551, cysteine 2545/cysteine 2562, cysteine 2567/cysteine 2579, cysteine 2574/cysteine 2592, and cysteine 2586/cysteine 2601. A glycan (N-linked (GlcNAc...) asparagine) is linked at asparagine 2602. Intrachain disulfides connect cysteine 2606–cysteine 2618, cysteine 2613–cysteine 2631, cysteine 2625–cysteine 2640, cysteine 2645–cysteine 2667, cysteine 2661–cysteine 2680, cysteine 2674–cysteine 2689, cysteine 2697–cysteine 2709, cysteine 2704–cysteine 2722, cysteine 2716–cysteine 2731, cysteine 2735–cysteine 2747, cysteine 2742–cysteine 2760, cysteine 2754–cysteine 2770, cysteine 2775–cysteine 2788, cysteine 2782–cysteine 2801, and cysteine 2795–cysteine 2813. N-linked (GlcNAc...) asparagine glycosylation is found at asparagine 2621 and asparagine 2639. N-linked (GlcNAc...) asparagine glycosylation is present at asparagine 2816. LDL-receptor class A domains follow at residues 2817–2856, 2857–2900, and 2903–2941; these read STCD…ECEY, PTCG…HCTS, and HKCN…RGCH. 15 cysteine pairs are disulfide-bonded: cysteine 2819–cysteine 2831, cysteine 2826–cysteine 2844, cysteine 2838–cysteine 2854, cysteine 2859–cysteine 2871, cysteine 2866–cysteine 2885, cysteine 2879–cysteine 2898, cysteine 2905–cysteine 2918, cysteine 2913–cysteine 2931, cysteine 2925–cysteine 2940, cysteine 2945–cysteine 2957, cysteine 2953–cysteine 2966, cysteine 2968–cysteine 2981, cysteine 2987–cysteine 2997, cysteine 2993–cysteine 3006, and cysteine 3008–cysteine 3022. Residue asparagine 2906 is glycosylated (N-linked (GlcNAc...) asparagine). In terms of domain architecture, EGF-like 11 spans 2942-2982; the sequence is VNECLSRKLSGCSQDCEDLKIGFKCRCRPGFRLKDDGRTCA. An EGF-like 12; calcium-binding domain is found at 2983 to 3023; the sequence is DLDECSTTFPCSQLCINTHGSYKCLCVEGYAPRGGDPHSCK. N-linked (GlcNAc...) asparagine glycosylation is found at asparagine 3049 and asparagine 3090. 5 LDL-receptor class B repeats span residues 3070 to 3114, 3115 to 3157, 3158 to 3201, 3202 to 3244, and 3245 to 3285; these read QMIY…DWVG, GNLY…DVQN, GYLY…DYVT, ERIY…FEDY, and VYWT…FHAL. The N-linked (GlcNAc...) asparagine glycan is linked to asparagine 3265. The region spanning 3291-3332 is the EGF-like 13 domain; it reads PNHPCKVNNGGCSNLCLLSPGGGHKCACPTNFYLGGDGRTCV. 3 disulfide bridges follow: cysteine 3295-cysteine 3306, cysteine 3302-cysteine 3316, and cysteine 3318-cysteine 3331. 11 consecutive LDL-receptor class A domains span residues 3333-3372, 3373-3411, 3412-3451, 3452-3492, 3493-3534, 3535-3573, 3574-3612, 3612-3650, 3653-3693, 3694-3734, and 3740-3779; these read SNCT…DCPE, FKCR…NCDI, HVCL…DCPE, VTCA…NCTQ, MTCG…ECDE, RTCE…SCTP, RPCS…DCTP, PRCD…ACGT, RTCP…ECAR, FICP…DCEP, and PHCK…DCSI. Residue asparagine 3334 is glycosylated (N-linked (GlcNAc...) asparagine). 39 disulfides stabilise this stretch: cysteine 3335–cysteine 3347, cysteine 3342–cysteine 3360, cysteine 3354–cysteine 3370, cysteine 3375–cysteine 3387, cysteine 3382–cysteine 3400, cysteine 3394–cysteine 3409, cysteine 3414–cysteine 3427, cysteine 3421–cysteine 3440, cysteine 3434–cysteine 3449, cysteine 3454–cysteine 3467, cysteine 3461–cysteine 3480, cysteine 3474–cysteine 3490, cysteine 3495–cysteine 3508, cysteine 3502–cysteine 3521, cysteine 3515–cysteine 3532, cysteine 3537–cysteine 3549, cysteine 3544–cysteine 3562, cysteine 3556–cysteine 3571, cysteine 3576–cysteine 3588, cysteine 3583–cysteine 3601, cysteine 3595–cysteine 3610, cysteine 3614–cysteine 3626, cysteine 3621–cysteine 3639, cysteine 3633–cysteine 3648, cysteine 3655–cysteine 3667, cysteine 3662–cysteine 3680, cysteine 3674–cysteine 3691, cysteine 3696–cysteine 3710, cysteine 3704–cysteine 3723, cysteine 3717–cysteine 3732, cysteine 3742–cysteine 3755, cysteine 3750–cysteine 3768, cysteine 3762–cysteine 3777, cysteine 3786–cysteine 3799, cysteine 3793–cysteine 3808, cysteine 3810–cysteine 3823, cysteine 3829–cysteine 3839, cysteine 3835–cysteine 3848, and cysteine 3850–cysteine 3861. N-linked (GlcNAc...) asparagine glycosylation occurs at asparagine 3489. Asparagine 3663 carries an N-linked (GlcNAc...) asparagine glycan. EGF-like domains are found at residues 3782–3824 and 3825–3862; these read KLTS…PGCQ and DINE…NTCK. Asparagine 3789 carries N-linked (GlcNAc...) asparagine glycosylation. The N-linked (GlcNAc...) asparagine glycan is linked to asparagine 3840. LDL-receptor class B repeat units lie at residues 3913–3955, 3971–4013, 4014–4057, and 4058–4102; these read GRVY…HLNI, GNVY…DPLR, GTMY…DYHN, and ERLY…FEDY. Residues 3941 to 3944 carry the Recognition site for proteolytical processing motif; that stretch reads RHRR. An N-linked (GlcNAc...) asparagine glycan is attached at asparagine 3954. Residues asparagine 4076 and asparagine 4126 are each glycosylated (N-linked (GlcNAc...) asparagine). 7 consecutive EGF-like domains span residues 4148 to 4184, 4197 to 4233, 4233 to 4269, 4269 to 4305, 4305 to 4341, 4341 to 4376, and 4374 to 4410; these read VTNP…GTCV, RPGT…DKCE, ELDQ…PKCT, TAQV…DRCQ, QYRQ…PRCE, EVNK…PSCL, and SCLT…PRCE. Cystine bridges form between cysteine 4152–cysteine 4161, cysteine 4157–cysteine 4170, cysteine 4172–cysteine 4183, cysteine 4201–cysteine 4211, cysteine 4205–cysteine 4221, cysteine 4223–cysteine 4232, cysteine 4237–cysteine 4247, cysteine 4241–cysteine 4257, cysteine 4259–cysteine 4268, cysteine 4273–cysteine 4283, cysteine 4277–cysteine 4293, cysteine 4295–cysteine 4304, cysteine 4309–cysteine 4319, cysteine 4313–cysteine 4329, cysteine 4331–cysteine 4340, cysteine 4345–cysteine 4353, and cysteine 4348–cysteine 4364. Asparagine 4180 is a glycosylation site (N-linked (GlcNAc...) asparagine). Residues asparagine 4279 and asparagine 4280 are each glycosylated (N-linked (GlcNAc...) asparagine). Residue asparagine 4365 is glycosylated (N-linked (GlcNAc...) asparagine). Disulfide bonds link cysteine 4366/cysteine 4375, cysteine 4378/cysteine 4388, cysteine 4382/cysteine 4398, and cysteine 4400/cysteine 4409. A helical membrane pass occupies residues 4425–4445; that stretch reads ILIPLLLLLLLLLVAGVVFWY. The Cytoplasmic segment spans residues 4446–4545; that stretch reads KRRVRGAKGF…PEDEIGDPLA (100 aa). The segment at 4446-4545 is interaction with MAFB; the sequence is KRRVRGAKGF…PEDEIGDPLA (100 aa). The residue at position 4461 (threonine 4461) is a Phosphothreonine. The short motif at 4503 to 4508 is the NPXY motif element; that stretch reads FTNPVY. Position 4508 is a phosphotyrosine (tyrosine 4508). Phosphoserine occurs at positions 4518, 4521, and 4524.

The protein belongs to the LDLR family. As to quaternary structure, heterodimer of an 85-kDa membrane-bound carboxyl subunit and a non-covalently attached 515-kDa N-terminal subunit. Intracellular domain interacts with MAFB. Found in a complex with PID1/PCLI1, LRP1 and CUBNI. Interacts with SNX17, PID1/PCLI1, PDGF and CUBN. The intracellular domain interacts with SHC1, GULP1 and DAB1. Can weakly interact (via NPXY motif) with DAB2 (via PID domain); the interaction is enhanced by tyrosine phosphorylation of the NPXY motif. Interacts with MDK; promotes neuronal survival. Interacts with LRPAP1; this interaction is followed by rapid internalization. Interacts with uPA/PLAU and PAI1/SERPINE1, either individually or in complex with each other, leading to rapid endocytosis; this interaction is abolished in the presence of LRPAP1/RAP. Also interacts with tPA/PLAT alone or in complex with SERPINE1. Interacts with the urokinase receptor PLAUR; this interaction leads to PLAUR internalization and is impaired in the presence of SORL1. Interacts with PDGFB. Interacts with TAU/MAPT, leading to endocytosis; this interaction is reduced in the presence of LRPAP1/RAP. Interacts with IGFBP3. Interacts with ADGRG6. In terms of processing, phosphorylated on serine and threonine residues. Phosphorylated on tyrosine residues upon stimulation with PDGF. Tyrosine phosphorylation promotes interaction with SHC1. Post-translationally, cleaved into a 85 kDa membrane-spanning subunit (LRP-85) and a 515 kDa large extracellular domain (LRP-515) that remains non-covalently associated. Gamma-secretase-dependent cleavage of LRP-85 releases the intracellular domain from the membrane.

It is found in the cell membrane. It localises to the membrane. Its subcellular location is the coated pit. The protein localises to the golgi outpost. The protein resides in the cytoplasm. It is found in the cytoskeleton. It localises to the microtubule organizing center. Its subcellular location is the nucleus. Functionally, endocytic receptor involved in endocytosis and in phagocytosis of apoptotic cells. Required for early embryonic development. Involved in cellular lipid homeostasis. Involved in the plasma clearance of chylomicron remnants and activated LRPAP1 (alpha 2-macroglobulin), as well as the local metabolism of complexes between plasminogen activators and their endogenous inhibitors. Acts as an alpha-2-macroglobulin receptor. Acts as a TAU/MAPT receptor and controls the endocytosis of TAU/MAPT as well as its subsequent spread. May modulate cellular events, such as APP metabolism, kinase-dependent intracellular signaling, neuronal calcium signaling as well as neurotransmission. Also acts as a receptor for IGFBP3 to mediate cell growth inhibition. In terms of biological role, (Microbial infection) Functions as a receptor for Vibrio cholerae cholix toxin and for Pseudomonas aeruginosa exotoxin A. This Mus musculus (Mouse) protein is Prolow-density lipoprotein receptor-related protein 1.